The following is a 168-amino-acid chain: Photosystem I assembly protein Ycf3 (168 aa).

TPR repeat units follow at residues 35–68, 72–105, and 120–153; these read AFTYYRDGMSAQSEGNYAEALQNYYEAMRLEIDP, SYILYNIGLIHTSNGEHTKALEYYFRALERNPFL, and GEQAIQQGDSELAETWFDQAAEYWKQAIALTPGN.

This sequence belongs to the Ycf3 family.

It localises to the plastid. The protein resides in the chloroplast thylakoid membrane. In terms of biological role, essential for the assembly of the photosystem I (PSI) complex. May act as a chaperone-like factor to guide the assembly of the PSI subunits. The polypeptide is Photosystem I assembly protein Ycf3 (Ipomoea purpurea (Common morning glory)).